Here is a 241-residue protein sequence, read N- to C-terminus: 2-C-methyl-D-erythritol 4-phosphate cytidylyltransferase (241 aa).

Belongs to the IspD/TarI cytidylyltransferase family. IspD subfamily.

The catalysed reaction is 2-C-methyl-D-erythritol 4-phosphate + CTP + H(+) = 4-CDP-2-C-methyl-D-erythritol + diphosphate. The protein operates within isoprenoid biosynthesis; isopentenyl diphosphate biosynthesis via DXP pathway; isopentenyl diphosphate from 1-deoxy-D-xylulose 5-phosphate: step 2/6. In terms of biological role, catalyzes the formation of 4-diphosphocytidyl-2-C-methyl-D-erythritol from CTP and 2-C-methyl-D-erythritol 4-phosphate (MEP). The sequence is that of 2-C-methyl-D-erythritol 4-phosphate cytidylyltransferase from Alkaliphilus metalliredigens (strain QYMF).